Reading from the N-terminus, the 307-residue chain is Ribonuclease Z (307 aa).

Residues H64, H66, D68, H69, H141, D209, and H267 each coordinate Zn(2+). The active-site Proton acceptor is the D68.

It belongs to the RNase Z family. As to quaternary structure, homodimer. Zn(2+) is required as a cofactor.

It carries out the reaction Endonucleolytic cleavage of RNA, removing extra 3' nucleotides from tRNA precursor, generating 3' termini of tRNAs. A 3'-hydroxy group is left at the tRNA terminus and a 5'-phosphoryl group is left at the trailer molecule.. Functionally, zinc phosphodiesterase, which displays some tRNA 3'-processing endonuclease activity. Probably involved in tRNA maturation, by removing a 3'-trailer from precursor tRNA. The chain is Ribonuclease Z from Thermoplasma acidophilum (strain ATCC 25905 / DSM 1728 / JCM 9062 / NBRC 15155 / AMRC-C165).